The sequence spans 102 residues: Aspartyl/glutamyl-tRNA(Asn/Gln) amidotransferase subunit C (102 aa).

Belongs to the GatC family. Heterotrimer of A, B and C subunits.

It carries out the reaction L-glutamyl-tRNA(Gln) + L-glutamine + ATP + H2O = L-glutaminyl-tRNA(Gln) + L-glutamate + ADP + phosphate + H(+). It catalyses the reaction L-aspartyl-tRNA(Asn) + L-glutamine + ATP + H2O = L-asparaginyl-tRNA(Asn) + L-glutamate + ADP + phosphate + 2 H(+). In terms of biological role, allows the formation of correctly charged Asn-tRNA(Asn) or Gln-tRNA(Gln) through the transamidation of misacylated Asp-tRNA(Asn) or Glu-tRNA(Gln) in organisms which lack either or both of asparaginyl-tRNA or glutaminyl-tRNA synthetases. The reaction takes place in the presence of glutamine and ATP through an activated phospho-Asp-tRNA(Asn) or phospho-Glu-tRNA(Gln). The polypeptide is Aspartyl/glutamyl-tRNA(Asn/Gln) amidotransferase subunit C (Bordetella avium (strain 197N)).